The following is a 964-amino-acid chain: MNSTLQNRNRTNLERVSTDPLDTFPRRHIGPDSQQVDKMLKSLGLSSLEELVDKAVPAGIRLKKEPDLPKASTEHKILQDLKNIASQNQIFRSYIGAGYNACIIPGVIQRNILENPGWYTAYTPYQAEISQGRLEALLNFQTMIIDLTGLEISNASLLDEGTAAAEAMFLAYSIRKNEIAKKFFVSELCHPQTIDVVVTRANPLGIEIVIGNHESVELNEDFFGVLLQYPATDGKIIDYTSFIQRAHNVGAISTVAADLLALTLLKSPGEMGADIAVGSSQRFGLPLGFGGPHAGYFATKDEFKRSMPGRLIGVSKDSQGNPGLRLSLQTREQHIRRDKATSNICTAQVLLAVISSMYAVYHGPEGLKDIATRIHKFTSILADALKSSGFTISNDTFFDTITIQAGAKAKDILNRARSERINLREYKDGRIGIALDETVNSDDIKDLFKIFEVKNTDIEKLFSNSGNISDSFKRSTSYLTHPVFQSFHTETKMLRYIRKLESRDLSLTTSMIPLGSCTMKLNATTEMYPVTWPEFGAIHPFAPSEQTKGYKIIFEQLEKWLCEITGFAGVSLQPNAGSQGEYAGLLAIRRYHESRKETHRNVCLIPISAHGTNPASAAMAGFKVVVVSCDQNGNVDLEDLKIKAEEHKNDLAALMITYPSTHGVFEESVKEICQIVHSRGGQVYMDGANMNAQVGLTSPGEIGADVCHLNLHKTFCIPHGGGGPGVGPIGVAKHLVPFLPGHVLVDNTTGNEHGAVSAAPWGSASIVLISWIYIALMGSEGLTNATRISILNANYIAKRLEKAYPVLYKGKNGFVAHECILDVRPFKKSAEIEVEDVAKRLIDYGFHAPTMSFPVPGTLMIEPTESESLEELDRFCEAMLLIHQEILDVQNGTLDKIDNPLKNSPHTAAMTTSDRWDHLYPKERAAYPAPWSRDHKFWPFVGRVDNVYGDRNLVCSCLPVESYQ.

Polar residues predominate over residues M1–R10. Residues M1–P25 form a disordered region. K713 carries the N6-(pyridoxal phosphate)lysine modification.

It belongs to the GcvP family. The glycine cleavage system is composed of four proteins: P, T, L and H. It depends on pyridoxal 5'-phosphate as a cofactor.

The catalysed reaction is N(6)-[(R)-lipoyl]-L-lysyl-[glycine-cleavage complex H protein] + glycine + H(+) = N(6)-[(R)-S(8)-aminomethyldihydrolipoyl]-L-lysyl-[glycine-cleavage complex H protein] + CO2. The glycine cleavage system catalyzes the degradation of glycine. The P protein binds the alpha-amino group of glycine through its pyridoxal phosphate cofactor; CO(2) is released and the remaining methylamine moiety is then transferred to the lipoamide cofactor of the H protein. This Leptospira borgpetersenii serovar Hardjo-bovis (strain JB197) protein is Glycine dehydrogenase (decarboxylating).